A 347-amino-acid polypeptide reads, in one-letter code: Protein RecA (347 aa).

67–74 is an ATP binding site; the sequence is GPESSGKT.

It belongs to the RecA family.

It is found in the cytoplasm. In terms of biological role, can catalyze the hydrolysis of ATP in the presence of single-stranded DNA, the ATP-dependent uptake of single-stranded DNA by duplex DNA, and the ATP-dependent hybridization of homologous single-stranded DNAs. It interacts with LexA causing its activation and leading to its autocatalytic cleavage. The protein is Protein RecA of Helicobacter pylori (strain Shi470).